Reading from the N-terminus, the 149-residue chain is Protein AIM7 (149 aa).

The residue at position 2 (Ser2) is an N-acetylserine. The 145-residue stretch at 3–147 (NLYKIGTETR…DVEELREQLE (145 aa)) folds into the ADF-H domain. Position 137 is a phosphoserine (Ser137).

The protein belongs to the actin-binding proteins ADF family. GMF subfamily.

It localises to the cytoplasm. It is found in the nucleus. Its function is as follows. May be involved in mitochondrial organization and biogenesis. This Saccharomyces cerevisiae (strain ATCC 204508 / S288c) (Baker's yeast) protein is Protein AIM7 (AIM7).